We begin with the raw amino-acid sequence, 88 residues long: MANSPQARKRARQAENRRQHNAAMRSMVRTYLKKVNAAIASGDQGSAQEAYNQAVSVLDKATRKGKFHPNKAARHKSRLNTKIKAMAA.

Disordered regions lie at residues 1-23 and 69-88; these read MANS…HNAA and PNKA…AMAA. Residues 69 to 81 are compositionally biased toward basic residues; it reads PNKAARHKSRLNT.

It belongs to the bacterial ribosomal protein bS20 family.

Its function is as follows. Binds directly to 16S ribosomal RNA. This is Small ribosomal subunit protein bS20 from Alcanivorax borkumensis (strain ATCC 700651 / DSM 11573 / NCIMB 13689 / SK2).